The chain runs to 217 residues: Probable transaldolase (217 aa).

Lysine 84 serves as the catalytic Schiff-base intermediate with substrate.

It belongs to the transaldolase family. Type 3B subfamily.

The protein resides in the cytoplasm. The enzyme catalyses D-sedoheptulose 7-phosphate + D-glyceraldehyde 3-phosphate = D-erythrose 4-phosphate + beta-D-fructose 6-phosphate. It functions in the pathway carbohydrate degradation; pentose phosphate pathway; D-glyceraldehyde 3-phosphate and beta-D-fructose 6-phosphate from D-ribose 5-phosphate and D-xylulose 5-phosphate (non-oxidative stage): step 2/3. Transaldolase is important for the balance of metabolites in the pentose-phosphate pathway. This Roseiflexus sp. (strain RS-1) protein is Probable transaldolase.